Here is a 546-residue protein sequence, read N- to C-terminus: Chaperonin GroEL 3 (546 aa).

Residues 30 to 33, lysine 51, 87 to 91, glycine 415, and aspartate 496 contribute to the ATP site; these read TLGP and DGTTT.

Belongs to the chaperonin (HSP60) family. In terms of assembly, forms a cylinder of 14 subunits composed of two heptameric rings stacked back-to-back. Interacts with the co-chaperonin GroES.

It localises to the cytoplasm. It carries out the reaction ATP + H2O + a folded polypeptide = ADP + phosphate + an unfolded polypeptide.. Its function is as follows. Together with its co-chaperonin GroES, plays an essential role in assisting protein folding. The GroEL-GroES system forms a nano-cage that allows encapsulation of the non-native substrate proteins and provides a physical environment optimized to promote and accelerate protein folding. The sequence is that of Chaperonin GroEL 3 from Bradyrhizobium diazoefficiens (strain JCM 10833 / BCRC 13528 / IAM 13628 / NBRC 14792 / USDA 110).